We begin with the raw amino-acid sequence, 292 residues long: Oxidative stress-responsive serine-rich protein 1 (292 aa).

Positions 24–178 are disordered; it reads ASGSVASLSV…ATQVPQASLK (155 aa). Over residues 65-83 the composition is skewed to basic residues; that stretch reads STRKSSRGAVRTQRRRRSK. A phosphothreonine mark is found at Thr143 and Thr233.

The polypeptide is Oxidative stress-responsive serine-rich protein 1 (OSER1) (Homo sapiens (Human)).